The primary structure comprises 106 residues: Large ribosomal subunit protein uL24 (106 aa).

It belongs to the universal ribosomal protein uL24 family. In terms of assembly, part of the 50S ribosomal subunit.

One of two assembly initiator proteins, it binds directly to the 5'-end of the 23S rRNA, where it nucleates assembly of the 50S subunit. Its function is as follows. One of the proteins that surrounds the polypeptide exit tunnel on the outside of the subunit. This Desulforamulus reducens (strain ATCC BAA-1160 / DSM 100696 / MI-1) (Desulfotomaculum reducens) protein is Large ribosomal subunit protein uL24.